The sequence spans 117 residues: Iron-sulfur cluster insertion protein ErpA (117 aa).

Residues C45, C109, and C111 each contribute to the iron-sulfur cluster site.

The protein belongs to the HesB/IscA family. In terms of assembly, homodimer. Requires iron-sulfur cluster as cofactor.

Required for insertion of 4Fe-4S clusters for at least IspG. In Hahella chejuensis (strain KCTC 2396), this protein is Iron-sulfur cluster insertion protein ErpA.